The following is a 367-amino-acid chain: WAT1-related protein At3g28050 (367 aa).

A run of 10 helical transmembrane segments spans residues 10 to 30 (VLPVTALVIMECANVGLNTLF), 40 to 60 (FHVFIVYSYGLAALLLLPSLF), 73 to 93 (FSILYKIVLLGIIGCCSNIMG), 103 to 123 (TLASAISNLTPAFTFLLAVVF), 142 to 162 (TVVSIGGAFIVTLYNGPVVIA), 179 to 199 (WILGAGFLAVEYFCVPLWYIV), 211 to 231 (FTVVCFYSIGVSFWTALVTLF), 246 to 266 (IALVSIVCSGLFGSCINNTIH), 276 to 296 (LFVAMFKPLSIAIAVAMGVIF), and 301 to 321 (LYIGSLIGATVITIGFYTVMW). 2 EamA domains span residues 25-153 (GLNT…FIVT) and 195-319 (LWYI…FYTV). The interval 338 to 367 (HEEANEADLDSPSGSQKAPLLESYKNDEHV) is disordered.

The protein belongs to the drug/metabolite transporter (DMT) superfamily. Plant drug/metabolite exporter (P-DME) (TC 2.A.7.4) family.

Its subcellular location is the membrane. The protein is WAT1-related protein At3g28050 of Arabidopsis thaliana (Mouse-ear cress).